The following is a 529-amino-acid chain: Bifunctional purine biosynthesis protein PurH (529 aa).

In terms of domain architecture, MGS-like spans 1–148 (MQQRRPVRRA…KNHKDVAIVV (148 aa)). N6-acetyllysine is present on Lys287.

Belongs to the PurH family.

The catalysed reaction is (6R)-10-formyltetrahydrofolate + 5-amino-1-(5-phospho-beta-D-ribosyl)imidazole-4-carboxamide = 5-formamido-1-(5-phospho-D-ribosyl)imidazole-4-carboxamide + (6S)-5,6,7,8-tetrahydrofolate. It catalyses the reaction IMP + H2O = 5-formamido-1-(5-phospho-D-ribosyl)imidazole-4-carboxamide. The protein operates within purine metabolism; IMP biosynthesis via de novo pathway; 5-formamido-1-(5-phospho-D-ribosyl)imidazole-4-carboxamide from 5-amino-1-(5-phospho-D-ribosyl)imidazole-4-carboxamide (10-formyl THF route): step 1/1. It functions in the pathway purine metabolism; IMP biosynthesis via de novo pathway; IMP from 5-formamido-1-(5-phospho-D-ribosyl)imidazole-4-carboxamide: step 1/1. This Escherichia coli O8 (strain IAI1) protein is Bifunctional purine biosynthesis protein PurH.